A 298-amino-acid chain; its full sequence is Tyrosine recombinase XerC (298 aa).

The region spanning 2-88 is the Core-binding (CB) domain; that stretch reads TDLHTDVERY…ALRSFFDWLV (87 aa). The Tyr recombinase domain occupies 109–288; it reads HLPKNIDVDD…DFQHLASVYD (180 aa). Catalysis depends on residues arginine 148, lysine 172, histidine 240, arginine 243, and histidine 266. Tyrosine 275 acts as the O-(3'-phospho-DNA)-tyrosine intermediate in catalysis.

Belongs to the 'phage' integrase family. XerC subfamily. As to quaternary structure, forms a cyclic heterotetrameric complex composed of two molecules of XerC and two molecules of XerD, in which XerC interacts with XerD via its C-terminal region, XerD interacts with XerC via its C-terminal region and so on.

It localises to the cytoplasm. With respect to regulation, ftsK may regulate the catalytic switch between XerC and XerD in the heterotetrameric complex during the two steps of the recombination process. Functionally, site-specific tyrosine recombinase, which acts by catalyzing the cutting and rejoining of the recombining DNA molecules. Binds cooperatively to specific DNA consensus sequences that are separated from XerD binding sites by a short central region, forming the heterotetrameric XerC-XerD complex that recombines DNA substrates. The complex is essential to convert dimers of the bacterial chromosome into monomers to permit their segregation at cell division. It also contributes to the segregational stability of plasmids. In the complex XerC specifically exchanges the top DNA strands. The sequence is that of Tyrosine recombinase XerC from Escherichia coli O6:K15:H31 (strain 536 / UPEC).